A 262-amino-acid polypeptide reads, in one-letter code: Probable carboxylesterase SOBER1-like (262 aa).

Residues Ser-151, Asp-205, and His-237 each act as charge relay system in the active site.

Belongs to the AB hydrolase superfamily. AB hydrolase 2 family.

In terms of biological role, carboxylesterase. The sequence is that of Probable carboxylesterase SOBER1-like from Arabidopsis thaliana (Mouse-ear cress).